Reading from the N-terminus, the 278-residue chain is MENAANYTRRILKGGAKAHKSLGQNFLMDDRVIEAIAAASIKDPEIPVVEIGPGLGVLTRVLAQKAQKVWAVELDRGKVNLLQRELQGLPVDILNMDALKLDLKDIWGTGKGVLVGNLPYYITSPLLMHFLEQKDSLASMVVMVQKEVADRLVAKPGGKDYGILSIAAQVSAQGEKLFEVPPQAFWPAPKVTSAVVRFELRSYPGFRVKEKDFFRVVKAAFSQRRKTLGNSLAGGLGLPKQQIGEILAAAGVDEQRRAETLSIDEFQAVTEAVMKNLD.

Residues asparagine 25, leucine 27, glycine 52, glutamate 73, aspartate 97, and asparagine 117 each contribute to the S-adenosyl-L-methionine site.

Belongs to the class I-like SAM-binding methyltransferase superfamily. rRNA adenine N(6)-methyltransferase family. RsmA subfamily.

It localises to the cytoplasm. It carries out the reaction adenosine(1518)/adenosine(1519) in 16S rRNA + 4 S-adenosyl-L-methionine = N(6)-dimethyladenosine(1518)/N(6)-dimethyladenosine(1519) in 16S rRNA + 4 S-adenosyl-L-homocysteine + 4 H(+). Specifically dimethylates two adjacent adenosines (A1518 and A1519) in the loop of a conserved hairpin near the 3'-end of 16S rRNA in the 30S particle. May play a critical role in biogenesis of 30S subunits. The protein is Ribosomal RNA small subunit methyltransferase A of Desulfitobacterium hafniense (strain DSM 10664 / DCB-2).